The sequence spans 462 residues: Gastric inhibitory polypeptide receptor (462 aa).

The signal sequence occupies residues 1-18 (MPLRPRLLLLCLWGLLLQ). Over 19–135 (QAETDSEGQT…DQRLILERLQ (117 aa)) the chain is Extracellular. Intrachain disulfides connect cysteine 43–cysteine 67, cysteine 58–cysteine 100, and cysteine 81–cysteine 115. Asparagine 59 and asparagine 74 each carry an N-linked (GlcNAc...) asparagine glycan. A helical transmembrane segment spans residues 136–158 (VVYTVGYSLSLGTLLLALLILSL). Over 159-166 (FRRLHCTR) the chain is Cytoplasmic. A helical membrane pass occupies residues 167–186 (NYIHMNVFLSFMLRAVAILT). Over 187–214 (RDRLLPTLGPYPGDRTLTLRNQALAACR) the chain is Extracellular. Residues 215 to 239 (TAQIVTQYCVGANYTWLLVEGVYLH) traverse the membrane as a helical segment. Over 240-251 (HLLVIVGGSEKG) the chain is Cytoplasmic. The helical transmembrane segment at 252–275 (HFRCYLLLGWGAPALFVIPWVIVR) threads the bilayer. The Extracellular segment spans residues 276-290 (YLLENTQCWERNEVK). Residues 291–316 (AIWWIIRTPILITILINFFIFIRILG) form a helical membrane-spanning segment. At 317–338 (ILVSKLRTRQMRCPDYRLRLAR) the chain is on the cytoplasmic side. A helical transmembrane segment spans residues 339–359 (STLTLVPLLGVHEVVFAPVTE). Residues 360–374 (EQAEGTLRFAKLAFE) lie on the Extracellular side of the membrane. A helical transmembrane segment spans residues 375-395 (IFLSSFQGFLVSVLYCFINKE). At 396-462 (VQSEIRRSWR…PGEEVLESYC (67 aa)) the chain is on the cytoplasmic side. The interval 421–462 (HAELGPQALPSRSAPREVPITGSTLPSGPLHGPGEEVLESYC) is disordered.

Belongs to the G-protein coupled receptor 2 family. May form homodimers and heterodimers with GLP1R. Post-translationally, N-glycosylation is required for cell surface expression and lengthens receptor half-life by preventing degradation in the ER. In terms of tissue distribution, widely distributed including pancreatic islets, brain and various peripheral tissues.

Its subcellular location is the cell membrane. In terms of biological role, this is a receptor for GIP. The activity of this receptor is mediated by G proteins which activate adenylyl cyclase. This is Gastric inhibitory polypeptide receptor (GIPR) from Mesocricetus auratus (Golden hamster).